A 343-amino-acid polypeptide reads, in one-letter code: Methylthioribose-1-phosphate isomerase (343 aa).

Residues 44–46, R85, and Q192 each bind substrate; that span reads RGA. The Proton donor role is filled by D233. 243 to 244 is a substrate binding site; the sequence is NK.

The protein belongs to the eIF-2B alpha/beta/delta subunits family. MtnA subfamily.

It catalyses the reaction 5-(methylsulfanyl)-alpha-D-ribose 1-phosphate = 5-(methylsulfanyl)-D-ribulose 1-phosphate. It participates in amino-acid biosynthesis; L-methionine biosynthesis via salvage pathway; L-methionine from S-methyl-5-thio-alpha-D-ribose 1-phosphate: step 1/6. Catalyzes the interconversion of methylthioribose-1-phosphate (MTR-1-P) into methylthioribulose-1-phosphate (MTRu-1-P). This is Methylthioribose-1-phosphate isomerase from Carboxydothermus hydrogenoformans (strain ATCC BAA-161 / DSM 6008 / Z-2901).